The following is a 797-amino-acid chain: Cleavage factor two protein 2 (797 aa).

Disordered stretches follow at residues E519–S557 and P677–E703. Residues K684–E703 are compositionally biased toward basic and acidic residues.

In terms of assembly, component of the cleavage and polyadenylation factor (CPF) complex, which is composed of cft1, cft2, ysh1, pta1, swd2, pfs2, dis2, yth1, ssu72, and fip1.

It localises to the nucleus. Its function is as follows. RNA-binding component of the cleavage and polyadenylation factor (CPF) complex, which plays a key role in polyadenylation-dependent pre-mRNA 3'-end formation and cooperates with cleavage factors including the CFIA complex and NAB4/CFIB. May be involved in poly(A)-site recognition. May be involved in the association of the CPF, CPFIA and RNA polymerase II complexes. The polypeptide is Cleavage factor two protein 2 (cft2) (Schizosaccharomyces pombe (strain 972 / ATCC 24843) (Fission yeast)).